The primary structure comprises 34 residues: Conotoxin de13a (34 aa).

Residues P3 and P7 each carry the 4-hydroxyproline modification. W14 is subject to 6'-bromotryptophan. K18 bears the 5-hydroxylysine mark. 4-hydroxyproline is present on P21. K25 carries the post-translational modification 5-hydroxylysine. Position 32 is a histidine amide (H32).

Contains 4 disulfide bonds. In terms of processing, the diastereomeric form of 5-hydroxylysine found was not conclusively established, but it is probably 5R. In terms of tissue distribution, expressed by the venom duct.

It localises to the secreted. In Conasprella delessertii (Sozon's cone), this protein is Conotoxin de13a.